A 172-amino-acid polypeptide reads, in one-letter code: Translation initiation factor IF-3 (172 aa).

This sequence belongs to the IF-3 family. As to quaternary structure, monomer.

It is found in the cytoplasm. Functionally, IF-3 binds to the 30S ribosomal subunit and shifts the equilibrium between 70S ribosomes and their 50S and 30S subunits in favor of the free subunits, thus enhancing the availability of 30S subunits on which protein synthesis initiation begins. This Geobacter metallireducens (strain ATCC 53774 / DSM 7210 / GS-15) protein is Translation initiation factor IF-3.